A 384-amino-acid chain; its full sequence is Flap endonuclease 1 (384 aa).

Positions 1–105 are N-domain; it reads MGIKGLTKLL…GELAKRKDKR (105 aa). Aspartate 34 lines the Mg(2+) pocket. Arginine 71 is a DNA binding site. 5 residues coordinate Mg(2+): aspartate 87, glutamate 159, glutamate 161, aspartate 180, and aspartate 182. Residues 123 to 254 form an I-domain region; sequence EIEKLSKRTV…VNALKYIKQY (132 aa). Glutamate 159 contributes to the DNA binding site. Residues glycine 232 and aspartate 234 each coordinate DNA. Aspartate 234 provides a ligand contact to Mg(2+). The interval 337–345 is interaction with PCNA; sequence GQNRLETFF. The interval 353-384 is disordered; that stretch reads STVGKRKEPEKGKGKFGAAGGKKSKGVTKRKF. Basic residues predominate over residues 374–384; it reads KKSKGVTKRKF.

Belongs to the XPG/RAD2 endonuclease family. FEN1 subfamily. Interacts with PCNA. Three molecules of FEN1 bind to one PCNA trimer with each molecule binding to one PCNA monomer. PCNA stimulates the nuclease activity without altering cleavage specificity. Mg(2+) serves as cofactor. Post-translationally, phosphorylated. Phosphorylation upon DNA damage induces relocalization to the nuclear plasma.

It localises to the nucleus. The protein localises to the nucleolus. Its subcellular location is the nucleoplasm. The protein resides in the mitochondrion. In terms of biological role, structure-specific nuclease with 5'-flap endonuclease and 5'-3' exonuclease activities involved in DNA replication and repair. During DNA replication, cleaves the 5'-overhanging flap structure that is generated by displacement synthesis when DNA polymerase encounters the 5'-end of a downstream Okazaki fragment. It enters the flap from the 5'-end and then tracks to cleave the flap base, leaving a nick for ligation. Also involved in the long patch base excision repair (LP-BER) pathway, by cleaving within the apurinic/apyrimidinic (AP) site-terminated flap. Acts as a genome stabilization factor that prevents flaps from equilibrating into structures that lead to duplications and deletions. Also possesses 5'-3' exonuclease activity on nicked or gapped double-stranded DNA, and exhibits RNase H activity. Also involved in replication and repair of rDNA and in repairing mitochondrial DNA. The polypeptide is Flap endonuclease 1 (Micromonas commoda (strain RCC299 / NOUM17 / CCMP2709) (Picoplanktonic green alga)).